The primary structure comprises 459 residues: Ribulose bisphosphate carboxylase (459 aa).

Residue Asn111 participates in substrate binding. Catalysis depends on Lys166, which acts as the Proton acceptor. Position 168 (Lys168) interacts with substrate. Mg(2+) is bound by residues Lys191, Asp193, and Glu194. Position 191 is an N6-carboxylysine (Lys191). His287 serves as the catalytic Proton acceptor. Residues Arg288, His321, and Ser368 each coordinate substrate.

The protein belongs to the RuBisCO large chain family. Type II subfamily. As to quaternary structure, homodimer. Mg(2+) serves as cofactor.

The protein localises to the cytoplasm. The catalysed reaction is 2 (2R)-3-phosphoglycerate + 2 H(+) = D-ribulose 1,5-bisphosphate + CO2 + H2O. It carries out the reaction D-ribulose 1,5-bisphosphate + O2 = 2-phosphoglycolate + (2R)-3-phosphoglycerate + 2 H(+). Functionally, ruBisCO catalyzes two reactions: the carboxylation of D-ribulose 1,5-bisphosphate, the primary event in carbon dioxide fixation, as well as the oxidative fragmentation of the pentose substrate. Both reactions occur simultaneously and in competition at the same active site. This is Ribulose bisphosphate carboxylase from Halothiobacillus neapolitanus (strain ATCC 23641 / c2) (Thiobacillus neapolitanus).